Consider the following 729-residue polypeptide: Fatty acid oxidation complex subunit alpha (729 aa).

The tract at residues 1 to 189 is enoyl-CoA hydratase/isomerase; it reads MLYKGDTLYL…KIGLVDGVVK (189 aa). Residue D296 coordinates substrate. The tract at residues 311-729 is 3-hydroxyacyl-CoA dehydrogenase; that stretch reads ETPKQAAVLG…ARPVGDLKTA (419 aa). Residues M324, D343, 400–402, K407, and S429 each bind NAD(+); that span reads VVE. Residue H450 is the For 3-hydroxyacyl-CoA dehydrogenase activity of the active site. N453 serves as a coordination point for NAD(+). Residues N500 and Y660 each coordinate substrate. The tract at residues 708–729 is disordered; that stretch reads RHNEPYYPPVEPARPVGDLKTA.

In the N-terminal section; belongs to the enoyl-CoA hydratase/isomerase family. The protein in the C-terminal section; belongs to the 3-hydroxyacyl-CoA dehydrogenase family. In terms of assembly, heterotetramer of two alpha chains (FadB) and two beta chains (FadA).

The catalysed reaction is a (3S)-3-hydroxyacyl-CoA + NAD(+) = a 3-oxoacyl-CoA + NADH + H(+). The enzyme catalyses a (3S)-3-hydroxyacyl-CoA = a (2E)-enoyl-CoA + H2O. It carries out the reaction a 4-saturated-(3S)-3-hydroxyacyl-CoA = a (3E)-enoyl-CoA + H2O. It catalyses the reaction (3S)-3-hydroxybutanoyl-CoA = (3R)-3-hydroxybutanoyl-CoA. The catalysed reaction is a (3Z)-enoyl-CoA = a 4-saturated (2E)-enoyl-CoA. The enzyme catalyses a (3E)-enoyl-CoA = a 4-saturated (2E)-enoyl-CoA. The protein operates within lipid metabolism; fatty acid beta-oxidation. Functionally, involved in the aerobic and anaerobic degradation of long-chain fatty acids via beta-oxidation cycle. Catalyzes the formation of 3-oxoacyl-CoA from enoyl-CoA via L-3-hydroxyacyl-CoA. It can also use D-3-hydroxyacyl-CoA and cis-3-enoyl-CoA as substrate. The protein is Fatty acid oxidation complex subunit alpha of Escherichia coli O139:H28 (strain E24377A / ETEC).